The following is a 92-amino-acid chain: Small ribosomal subunit protein uS19 (92 aa).

It belongs to the universal ribosomal protein uS19 family.

Protein S19 forms a complex with S13 that binds strongly to the 16S ribosomal RNA. The chain is Small ribosomal subunit protein uS19 from Rickettsia bellii (strain OSU 85-389).